The chain runs to 176 residues: RNA pyrophosphohydrolase (176 aa).

A Nudix hydrolase domain is found at 6-149 (GYRPNVGIVI…KRDVYRRVMK (144 aa)). Residues 38 to 59 (GGINPGESAEQAMYRELFEEVG) carry the Nudix box motif.

This sequence belongs to the Nudix hydrolase family. RppH subfamily. It depends on a divalent metal cation as a cofactor.

In terms of biological role, accelerates the degradation of transcripts by removing pyrophosphate from the 5'-end of triphosphorylated RNA, leading to a more labile monophosphorylated state that can stimulate subsequent ribonuclease cleavage. The sequence is that of RNA pyrophosphohydrolase from Shigella boydii serotype 4 (strain Sb227).